The following is a 463-amino-acid chain: Asparagine--tRNA ligase (463 aa).

Belongs to the class-II aminoacyl-tRNA synthetase family. In terms of assembly, homodimer.

Its subcellular location is the cytoplasm. It catalyses the reaction tRNA(Asn) + L-asparagine + ATP = L-asparaginyl-tRNA(Asn) + AMP + diphosphate + H(+). The chain is Asparagine--tRNA ligase from Acholeplasma laidlawii (strain PG-8A).